The sequence spans 37 residues: Large ribosomal subunit protein bL36 (37 aa).

This sequence belongs to the bacterial ribosomal protein bL36 family.

This Leptospira interrogans serogroup Icterohaemorrhagiae serovar copenhageni (strain Fiocruz L1-130) protein is Large ribosomal subunit protein bL36.